Here is a 212-residue protein sequence, read N- to C-terminus: MNLFRFLGDLSHLLAIILLLLKIWKSRSCAGISGKSQVLFAVVFTARYLDLFTNYISLYNTCMKVVYIACSFTTVWMIYSKFKATYDGNHDTFRVEFLVVPTAILAFLVNHDFTPLEILWTFSIYLESVAILPQLFMVSKTGEAETITSHYLFALGVYRTLYLFNWIWRYHFEGFFDLIAIVAGLVQTVLYCDFFYLYITKVLKGKKLSLPA.

Residues 1–4 (MNLF) lie on the Lumenal side of the membrane. A helical membrane pass occupies residues 5-24 (RFLGDLSHLLAIILLLLKIW). At 25 to 32 (KSRSCAGI) the chain is on the cytoplasmic side. Residues 33–52 (SGKSQVLFAVVFTARYLDLF) form a helical membrane-spanning segment. Residues 47 to 48 (RY) are interaction with the K-D-E-L motif on target proteins. Residues 53–58 (TNYISL) lie on the Lumenal side of the membrane. A helical membrane pass occupies residues 59–79 (YNTCMKVVYIACSFTTVWMIY). Topologically, residues 80-92 (SKFKATYDGNHDT) are cytoplasmic. Residues 93 to 110 (FRVEFLVVPTAILAFLVN) traverse the membrane as a helical segment. Topologically, residues 111-116 (HDFTPL) are lumenal. Residues 117–135 (EILWTFSIYLESVAILPQL) form a helical membrane-spanning segment. The Cytoplasmic segment spans residues 136–149 (FMVSKTGEAETITS). The helical transmembrane segment at 150–168 (HYLFALGVYRTLYLFNWIW) threads the bilayer. Residues 159-169 (RTLYLFNWIWR) are interaction with the K-D-E-L motif on target proteins. At 169–178 (RYHFEGFFDL) the chain is on the lumenal side. Residues 179–199 (IAIVAGLVQTVLYCDFFYLYI) form a helical membrane-spanning segment. Over 200-212 (TKVLKGKKLSLPA) the chain is Cytoplasmic. Positions 204-207 (KGKK) are important for recycling of cargo proteins with the sequence motif K-D-E-L from the Golgi to the endoplasmic reticulum. A Phosphoserine; by PKA modification is found at S209.

The protein belongs to the ERD2 family. Upon ligand binding the receptor oligomerizes and interacts with components of the transport machinery such as ARFGAP1 and ARF1. Post-translationally, phosphorylation by PKA at Ser-209 is required for endoplasmic reticulum retention function.

It localises to the golgi apparatus membrane. The protein resides in the cytoplasmic vesicle. Its subcellular location is the COPI-coated vesicle membrane. The protein localises to the endoplasmic reticulum membrane. It is found in the endoplasmic reticulum-Golgi intermediate compartment membrane. Its function is as follows. Receptor for the C-terminal sequence motif K-D-E-L that is present on endoplasmic reticulum resident proteins and that mediates their recycling from the Golgi back to the endoplasmic reticulum. The sequence is that of ER lumen protein-retaining receptor 1 (Kdelr1) from Mus musculus (Mouse).